A 141-amino-acid polypeptide reads, in one-letter code: 3-hydroxyacyl-[acyl-carrier-protein] dehydratase FabZ (141 aa).

The active site involves histidine 48.

The protein belongs to the thioester dehydratase family. FabZ subfamily.

The protein resides in the cytoplasm. The enzyme catalyses a (3R)-hydroxyacyl-[ACP] = a (2E)-enoyl-[ACP] + H2O. Functionally, involved in unsaturated fatty acids biosynthesis. Catalyzes the dehydration of short chain beta-hydroxyacyl-ACPs and long chain saturated and unsaturated beta-hydroxyacyl-ACPs. In Streptococcus thermophilus (strain CNRZ 1066), this protein is 3-hydroxyacyl-[acyl-carrier-protein] dehydratase FabZ.